The following is a 205-amino-acid chain: Urease accessory protein UreG 1 (205 aa).

14–21 contributes to the GTP binding site; that stretch reads GPVGSGKT.

The protein belongs to the SIMIBI class G3E GTPase family. UreG subfamily. Homodimer. UreD, UreF and UreG form a complex that acts as a GTP-hydrolysis-dependent molecular chaperone, activating the urease apoprotein by helping to assemble the nickel containing metallocenter of UreC. The UreE protein probably delivers the nickel.

It is found in the cytoplasm. Functionally, facilitates the functional incorporation of the urease nickel metallocenter. This process requires GTP hydrolysis, probably effectuated by UreG. This chain is Urease accessory protein UreG 1, found in Methylobacterium radiotolerans (strain ATCC 27329 / DSM 1819 / JCM 2831 / NBRC 15690 / NCIMB 10815 / 0-1).